The following is a 211-amino-acid chain: Urease accessory protein UreG (211 aa).

11 to 18 (GPVGAGKT) is a GTP binding site.

Belongs to the SIMIBI class G3E GTPase family. UreG subfamily. Homodimer. UreD, UreF and UreG form a complex that acts as a GTP-hydrolysis-dependent molecular chaperone, activating the urease apoprotein by helping to assemble the nickel containing metallocenter of UreC. The UreE protein probably delivers the nickel.

It localises to the cytoplasm. Its function is as follows. Facilitates the functional incorporation of the urease nickel metallocenter. This process requires GTP hydrolysis, probably effectuated by UreG. The polypeptide is Urease accessory protein UreG (Actinobacillus pleuropneumoniae serotype 7 (strain AP76)).